Consider the following 86-residue polypeptide: Protein Tat (86 aa).

The segment at M1–N24 is interaction with human CREBBP. The transactivation stretch occupies residues M1 to G48. Zn(2+) is bound by residues C22, C25, and C27. The interval C22 to C37 is cysteine-rich. The residue at position 28 (K28) is an N6-acetyllysine; by host PCAF. Residues C30, H33, C34, and C37 each contribute to the Zn(2+) site. The tract at residues F38–G48 is core. A compositionally biased stretch (basic residues) spans G48 to H59. A disordered region spans residues G48–E86. Positions R49–R57 match the Nuclear localization signal, RNA-binding (TAR), and protein transduction motif. Positions R49–E86 are interaction with the host capping enzyme RNGTT. N6-acetyllysine; by host EP300 and GCN5L2 is present on residues K50 and K51. An asymmetric dimethylarginine; by host PRMT6 mark is found at R52 and R53. Residues Q60–P77 show a composition bias toward polar residues. Residue K71 forms a Glycyl lysine isopeptide (Lys-Gly) (interchain with G-Cter in ubiquitin) linkage. The Cell attachment site signature appears at R78–D80.

The protein belongs to the lentiviruses Tat family. As to quaternary structure, interacts with host CCNT1. Associates with the P-TEFb complex composed at least of Tat, P-TEFb (CDK9 and CCNT1), TAR RNA, RNA Pol II. Recruits the HATs CREBBP, TAF1/TFIID, EP300, PCAF and GCN5L2. Interacts with host KAT5/Tip60; this interaction targets the latter to degradation. Interacts with the host deacetylase SIRT1. Interacts with host capping enzyme RNGTT; this interaction stimulates RNGTT. Binds to host KDR, and to the host integrins ITGAV/ITGB3 and ITGA5/ITGB1. Interacts with host KPNB1/importin beta-1 without previous binding to KPNA1/importin alpha-1. Interacts with EIF2AK2. Interacts with host nucleosome assembly protein NAP1L1; this interaction may be required for the transport of Tat within the nucleus, since the two proteins interact at the nuclear rim. Interacts with host C1QBP/SF2P32; this interaction involves lysine-acetylated Tat. Interacts with the host chemokine receptors CCR2, CCR3 and CXCR4. Interacts with host DPP4/CD26; this interaction may trigger an anti-proliferative effect. Interacts with host LDLR. Interacts with the host extracellular matrix metalloproteinase MMP1. Interacts with host PRMT6; this interaction mediates Tat's methylation. Interacts with, and is ubiquitinated by MDM2/Hdm2. Interacts with host PSMC3 and HTATIP2. Interacts with STAB1; this interaction may overcome SATB1-mediated repression of IL2 and IL2RA (interleukin) in T cells by binding to the same domain than HDAC1. Interacts (when acetylated) with human CDK13, thereby increasing HIV-1 mRNA splicing and promoting the production of the doubly spliced HIV-1 protein Nef. Interacts with host TBP; this interaction modulates the activity of transcriptional pre-initiation complex. Interacts with host RELA. Interacts with host PLSCR1; this interaction negatively regulates Tat transactivation activity by altering its subcellular distribution. Asymmetrical arginine methylation by host PRMT6 seems to diminish the transactivation capacity of Tat and affects the interaction with host CCNT1. Post-translationally, acetylation by EP300, CREBBP, GCN5L2/GCN5 and PCAF regulates the transactivation activity of Tat. EP300-mediated acetylation of Lys-50 promotes dissociation of Tat from the TAR RNA through the competitive binding to PCAF's bromodomain. In addition, the non-acetylated Tat's N-terminus can also interact with PCAF. PCAF-mediated acetylation of Lys-28 enhances Tat's binding to CCNT1. Lys-50 is deacetylated by SIRT1. In terms of processing, polyubiquitination by host MDM2 does not target Tat to degradation, but activates its transactivation function and fosters interaction with CCNT1 and TAR RNA. Phosphorylated by EIF2AK2 on serine and threonine residues adjacent to the basic region important for TAR RNA binding and function. Phosphorylation of Tat by EIF2AK2 is dependent on the prior activation of EIF2AK2 by dsRNA.

The protein localises to the host nucleus. It localises to the host nucleolus. Its subcellular location is the host cytoplasm. The protein resides in the secreted. Transcriptional activator that increases RNA Pol II processivity, thereby increasing the level of full-length viral transcripts. Recognizes a hairpin structure at the 5'-LTR of the nascent viral mRNAs referred to as the transactivation responsive RNA element (TAR) and recruits the cyclin T1-CDK9 complex (P-TEFb complex) that will in turn hyperphosphorylate the RNA polymerase II to allow efficient elongation. The CDK9 component of P-TEFb and other Tat-activated kinases hyperphosphorylate the C-terminus of RNA Pol II that becomes stabilized and much more processive. Other factors such as HTATSF1/Tat-SF1, SUPT5H/SPT5, and HTATIP2 are also important for Tat's function. Besides its effect on RNA Pol II processivity, Tat induces chromatin remodeling of proviral genes by recruiting the histone acetyltransferases (HATs) CREBBP, EP300 and PCAF to the chromatin. This also contributes to the increase in proviral transcription rate, especially when the provirus integrates in transcriptionally silent region of the host genome. To ensure maximal activation of the LTR, Tat mediates nuclear translocation of NF-kappa-B by interacting with host RELA. Through its interaction with host TBP, Tat may also modulate transcription initiation. Tat can reactivate a latently infected cell by penetrating in it and transactivating its LTR promoter. In the cytoplasm, Tat is thought to act as a translational activator of HIV-1 mRNAs. Functionally, extracellular circulating Tat can be endocytosed by surrounding uninfected cells via the binding to several surface receptors such as CD26, CXCR4, heparan sulfate proteoglycans (HSPG) or LDLR. Neurons are rarely infected, but they internalize Tat via their LDLR. Through its interaction with nuclear HATs, Tat is potentially able to control the acetylation-dependent cellular gene expression. Modulates the expression of many cellular genes involved in cell survival, proliferation or in coding for cytokines or cytokine receptors. Tat plays a role in T-cell and neurons apoptosis. Tat induced neurotoxicity and apoptosis probably contribute to neuroAIDS. Circulating Tat also acts as a chemokine-like and/or growth factor-like molecule that binds to specific receptors on the surface of the cells, affecting many cellular pathways. In the vascular system, Tat binds to ITGAV/ITGB3 and ITGA5/ITGB1 integrins dimers at the surface of endothelial cells and competes with bFGF for heparin-binding sites, leading to an excess of soluble bFGF. The chain is Protein Tat from Homo sapiens (Human).